Consider the following 297-residue polypeptide: MSGAGVGGGIVIVDKPAGMTSHDVVGRCRRIFGTRKVGHAGTLDPMATGVLVVGIDRATKLLGLLTATDKSYEATIRLGQTTTTEDAEGDVVETTPATGITDEQIGHAVAALRGEIDQVPSAVSAIKVGGQRAYKLAREGQTVELAARRVRIDRFEVLAIRRVDGFVDVDVAVDCSSGTYIRALARDVGVTLGVGGHLTLLRRTRVGRFGLDEAYPLDALADEPRLSHSLDEACLLSFPRRDLTPAEAESTRHGRALAPAGIDGVYAAAAPDGSVLALLEDGPQRTKSVVVLRPATL.

The active-site Nucleophile is the Asp-44.

It belongs to the pseudouridine synthase TruB family. Type 1 subfamily.

The catalysed reaction is uridine(55) in tRNA = pseudouridine(55) in tRNA. Functionally, responsible for synthesis of pseudouridine from uracil-55 in the psi GC loop of transfer RNAs. This is tRNA pseudouridine synthase B from Mycobacterium sp. (strain JLS).